The following is a 389-amino-acid chain: Phospho-N-acetylmuramoyl-pentapeptide-transferase (389 aa).

Helical transmembrane passes span 25-45, 74-94, 97-117, 134-154, 190-210, 222-242, 259-279, 286-306, 311-331, and 366-386; these read RAVM…PWVI, MGGV…CDWG, FIWV…VDDY, FFWQ…SVSE, VSYP…IVGS, GLVI…AYVM, AGEL…FLWF, VFMG…VAVI, IVLF…MLQV, and QVTV…LSTL.

This sequence belongs to the glycosyltransferase 4 family. MraY subfamily. It depends on Mg(2+) as a cofactor.

The protein resides in the cell inner membrane. It carries out the reaction UDP-N-acetyl-alpha-D-muramoyl-L-alanyl-gamma-D-glutamyl-meso-2,6-diaminopimeloyl-D-alanyl-D-alanine + di-trans,octa-cis-undecaprenyl phosphate = di-trans,octa-cis-undecaprenyl diphospho-N-acetyl-alpha-D-muramoyl-L-alanyl-D-glutamyl-meso-2,6-diaminopimeloyl-D-alanyl-D-alanine + UMP. Its pathway is cell wall biogenesis; peptidoglycan biosynthesis. Its function is as follows. Catalyzes the initial step of the lipid cycle reactions in the biosynthesis of the cell wall peptidoglycan: transfers peptidoglycan precursor phospho-MurNAc-pentapeptide from UDP-MurNAc-pentapeptide onto the lipid carrier undecaprenyl phosphate, yielding undecaprenyl-pyrophosphoryl-MurNAc-pentapeptide, known as lipid I. This chain is Phospho-N-acetylmuramoyl-pentapeptide-transferase, found in Cupriavidus pinatubonensis (strain JMP 134 / LMG 1197) (Cupriavidus necator (strain JMP 134)).